The following is a 73-amino-acid chain: Conotoxin ArMKLT2-022 (73 aa).

The first 22 residues, 1 to 22, serve as a signal peptide directing secretion; sequence MKLTCVLIIAVLFLTACQLTTG. The propeptide occupies 23–40; sequence EQKDHAQRSADRNSKLTR. Gln-41 is modified (pyrrolidone carboxylic acid). Intrachain disulfides connect Cys-42/Cys-56, Cys-49/Cys-60, and Cys-55/Cys-67.

Belongs to the conotoxin O1 superfamily. As to expression, expressed by the venom duct.

The protein localises to the secreted. The protein is Conotoxin ArMKLT2-022 of Conus arenatus (Sand-dusted cone).